The following is a 743-amino-acid chain: NAD(P)H-quinone oxidoreductase subunit 5, chloroplastic (743 aa).

The next 16 membrane-spanning stretches (helical) occupy residues 9–29, 40–60, 89–109, 125–145, 147–167, 185–205, 224–244, 258–278, 284–304, 327–347, 354–374, 396–416, 425–445, 551–571, 607–627, and 723–743; these read WIIP…LLLF, WAFQ…NLSI, IDPL…MVLI, FAYM…SNLI, IYIF…FWFT, GDFG…SFEF, VFVT…SAQF, TPIS…FLVA, FIVI…TVFF, LGYM…FHLI, ALLF…VGYC, NSFL…CFWS, WLYS…TAFY, LFPI…GIPF, VFSV…YKPV, and YLFF…FLNL.

Belongs to the complex I subunit 5 family. As to quaternary structure, NDH is composed of at least 16 different subunits, 5 of which are encoded in the nucleus.

The protein localises to the plastid. The protein resides in the chloroplast thylakoid membrane. It catalyses the reaction a plastoquinone + NADH + (n+1) H(+)(in) = a plastoquinol + NAD(+) + n H(+)(out). The catalysed reaction is a plastoquinone + NADPH + (n+1) H(+)(in) = a plastoquinol + NADP(+) + n H(+)(out). In terms of biological role, NDH shuttles electrons from NAD(P)H:plastoquinone, via FMN and iron-sulfur (Fe-S) centers, to quinones in the photosynthetic chain and possibly in a chloroplast respiratory chain. The immediate electron acceptor for the enzyme in this species is believed to be plastoquinone. Couples the redox reaction to proton translocation, and thus conserves the redox energy in a proton gradient. The protein is NAD(P)H-quinone oxidoreductase subunit 5, chloroplastic (ndhF) of Helianthus annuus (Common sunflower).